The sequence spans 290 residues: Ankyrin repeat and SOCS box protein 9 (290 aa).

Residue methionine 1 is modified to N-acetylmethionine. Residues 1 to 11 (MDGEQRGRSDR) show a composition bias toward basic and acidic residues. The interval 1–20 (MDGEQRGRSDRPGGSPHLPF) is disordered. 6 ANK repeats span residues 31-60 (SDWS…PVNI), 64-93 (DHVS…QVNG), 97-126 (DWRT…TPHP), 129-158 (ELAS…NIDY), 162-191 (HLGT…SVNQ), and 194-223 (GLDS…NAQA). The 55-residue stretch at 236–290 (PLESPLIQIFLQNEGPQSLRQLCRLRIRKCFGIRQHHKISELLLPEDLKRFLLHL) folds into the SOCS box domain.

Belongs to the ankyrin SOCS box (ASB) family. As to quaternary structure, substrate-recognition component of the ECS(ASB9) complex, composed of ASB9, CUL5, ELOB, ELOC and RNF7/RBX2.

It localises to the mitochondrion. It functions in the pathway protein modification; protein ubiquitination. Functionally, substrate-recognition component of a cullin-5-RING E3 ubiquitin-protein ligase complex (ECS complex, also named CRL5 complex), which mediates the ubiquitination and subsequent proteasomal degradation of target proteins. The ECS(ASB9) complex catalyzes ubiquitination of creatine kinases CKB and CKMT1A. This Mus musculus (Mouse) protein is Ankyrin repeat and SOCS box protein 9.